Reading from the N-terminus, the 262-residue chain is Rhomboid-type serine protease 2 (262 aa).

At 1–16 the chain is on the cytoplasmic side; the sequence is MNWKSYVFPGGHPPAA. A helical transmembrane segment spans residues 17–37; it reads LTTGLVVFLTAIYLLSFIFAL. Residues 38–57 lie on the Lumenal side of the membrane; it reads REDLSLAPESLFKLQMSRLS. Residues 58-78 form a helical membrane-spanning segment; that stretch reads LYPLIHLSLPHLLFNVLAIWA. Topologically, residues 79-89 are cytoplasmic; the sequence is PLNLFEETHGT. The helical transmembrane segment at 90–110 threads the bilayer; that stretch reads VYTGVFLNLSALFAGILYCLL. The Lumenal portion of the chain corresponds to 111–112; that stretch reads GK. The helical transmembrane segment at 113 to 133 threads the bilayer; the sequence is LLYPEALVAGASGWCFTLFAY. The Nucleophile role is filled by Ser124. Topologically, residues 134–151 are cytoplasmic; that stretch reads YSFKESQIRPRTRIFRTD. The helical transmembrane segment at 152-168 threads the bilayer; that stretch reads YSIPTLYTPLVLLVAIA. At 169–174 the chain is on the lumenal side; sequence VVIPGS. The helical transmembrane segment at 175–191 threads the bilayer; that stretch reads SFWGHFFGLCVGYAIGY. His179 is a catalytic residue. Over 192 to 262 the chain is Cytoplasmic; sequence KESWFNKITP…DNSGTVLGTA (71 aa). Residues 243–262 are disordered; it reads STETPLPLHNDNSGTVLGTA. Residues 252–262 are compositionally biased toward polar residues; the sequence is NDNSGTVLGTA.

It belongs to the peptidase S54 family. In terms of assembly, interacts with SNX3.

The protein resides in the golgi apparatus membrane. Its subcellular location is the golgi apparatus. It localises to the cis-Golgi network membrane. The enzyme catalyses Cleaves type-1 transmembrane domains using a catalytic dyad composed of serine and histidine that are contributed by different transmembrane domains.. Its function is as follows. Probable rhomboid-type serine protease that catalyzes intramembrane proteolysis. This is Rhomboid-type serine protease 2 (RBD2) from Saccharomyces cerevisiae (strain ATCC 204508 / S288c) (Baker's yeast).